The following is a 237-amino-acid chain: RING-H2 finger protein ATL57 (237 aa).

The chain crosses the membrane as a helical span at residues 51-71; sequence ALTIFILLVALFFMGFFSVYF. Residues 140–182 form an RING-type; atypical zinc finger; that stretch reads CVICLSDFEEGETVKVIPHCGHVFHVDCVDTWLSSYVTCPLCR.

Belongs to the RING-type zinc finger family. ATL subfamily.

It localises to the membrane. It carries out the reaction S-ubiquitinyl-[E2 ubiquitin-conjugating enzyme]-L-cysteine + [acceptor protein]-L-lysine = [E2 ubiquitin-conjugating enzyme]-L-cysteine + N(6)-ubiquitinyl-[acceptor protein]-L-lysine.. The protein operates within protein modification; protein ubiquitination. The sequence is that of RING-H2 finger protein ATL57 (ATL57) from Arabidopsis thaliana (Mouse-ear cress).